Consider the following 733-residue polypeptide: MKSLVNLWGIYPFIRNNSLHGFAKIPRIVSTIPRQLRFSSLRHPTRQMDLIHDTVVVENLNTFAVVGQDQWKRKEPQPVQIDVYMRNNVQLAGEKDELKSTIHYGIASKLLRKEIEGSFFTTPKDLVNKIASLCFEDVIDTSHVSIKLTLPKCVLRSKNGLHYYAERERNSTSNFVDRIEFSDLELATILGIHAFERQEKQRVCLNISFANTEVEALEIARAIAEYVEQSAFLTIEALVVNLSKYLCFTKNLDDISIKAEKPSAITFANASAVQIYRTRSYFLQESLHKYESTKNKIAYLSFGSNIGDKFEQIQTALSMLHKIEGIRVLDVSPLYETEPMYYKDQPSFLNGVCKIETRMSPINLLRACQSIEQEMGRIKTILKGPRCIDLDIVLYEDCVYESEVLTIPHLGLQEREFVLRPLLALSPDLVHPYTHQPLQEALDKLPSQGIRLYSSFDNKKIINGALTMGILNVTPDSFSDGGKVSQNNILEKAKSMVGDGASILDIGGQSTKPGADPVSVEEELRRVIPMISLLRSSGITVPISIDTYYSKVAKLAIEAGANIINDVTGGMGDEKMLPLAASLQVPICIMHMRGTPETMKALSIYEKDIVEEVAVELSSRVEAAVQSGVHRYNIILDPGFGFAKTPKQSAGLLGRLHELMKKPQFKDMHWLSGPSRKGFTGYFTGDASPKDRIWGTSACVTASVLQGVSIVRVHDTKEMSKVVGMANAIRYVP.

DHNA stretches follow at residues 55–167 (VVVE…YAER) and 179–277 (IEFS…QIYR). Position 281 is a phosphotyrosine (tyrosine 281). Residues 295–454 (NKIAYLSFGS…LPSQGIRLYS (160 aa)) form an HPK region. The 260-residue stretch at 465–724 (ALTMGILNVT…DTKEMSKVVG (260 aa)) folds into the Pterin-binding domain. Residues 467-733 (TMGILNVTPD…GMANAIRYVP (267 aa)) form a DHPS region. Mg(2+) is bound at residue asparagine 472. Residues threonine 511, aspartate 546, asparagine 565, aspartate 637, lysine 677, and 712–714 (RVH) contribute to the (7,8-dihydropterin-6-yl)methyl diphosphate site.

It in the N-terminal section; belongs to the DHNA family. In the central section; belongs to the HPPK family. This sequence in the C-terminal section; belongs to the DHPS family. Mg(2+) serves as cofactor.

It is found in the cytoplasm. The enzyme catalyses 7,8-dihydroneopterin = 6-hydroxymethyl-7,8-dihydropterin + glycolaldehyde. It catalyses the reaction 6-hydroxymethyl-7,8-dihydropterin + ATP = (7,8-dihydropterin-6-yl)methyl diphosphate + AMP + H(+). It carries out the reaction (7,8-dihydropterin-6-yl)methyl diphosphate + 4-aminobenzoate = 7,8-dihydropteroate + diphosphate. The protein operates within cofactor biosynthesis; tetrahydrofolate biosynthesis; 2-amino-4-hydroxy-6-hydroxymethyl-7,8-dihydropteridine diphosphate from 7,8-dihydroneopterin triphosphate: step 3/4. Its pathway is cofactor biosynthesis; tetrahydrofolate biosynthesis; 2-amino-4-hydroxy-6-hydroxymethyl-7,8-dihydropteridine diphosphate from 7,8-dihydroneopterin triphosphate: step 4/4. It functions in the pathway cofactor biosynthesis; tetrahydrofolate biosynthesis; 7,8-dihydrofolate from 2-amino-4-hydroxy-6-hydroxymethyl-7,8-dihydropteridine diphosphate and 4-aminobenzoate: step 1/2. In terms of biological role, catalyzes three sequential steps of tetrahydrofolate biosynthesis. The polypeptide is Folic acid synthesis protein fol1 (fol1) (Schizosaccharomyces pombe (strain 972 / ATCC 24843) (Fission yeast)).